A 545-amino-acid polypeptide reads, in one-letter code: Glucose-6-phosphate isomerase (545 aa).

The active-site Proton donor is the Glu-351. Residues His-382 and Lys-510 contribute to the active site.

It belongs to the GPI family.

It is found in the cytoplasm. It catalyses the reaction alpha-D-glucose 6-phosphate = beta-D-fructose 6-phosphate. It functions in the pathway carbohydrate biosynthesis; gluconeogenesis. The protein operates within carbohydrate degradation; glycolysis; D-glyceraldehyde 3-phosphate and glycerone phosphate from D-glucose: step 2/4. In terms of biological role, catalyzes the reversible isomerization of glucose-6-phosphate to fructose-6-phosphate. The chain is Glucose-6-phosphate isomerase from Shewanella halifaxensis (strain HAW-EB4).